We begin with the raw amino-acid sequence, 225 residues long: MERQLKSIAYAFVANDIDVYIPDGESNCIVVTKLVCKDCGQYWHTSLSECYFCGTLNFYLYECNSCGKKYSLTSSSKSCDTDGCNGKLIKRCSNPECISRTNEEIQRATDEQGGVFDLNSSFNVSLNHCVTCGSKENYYKTYRIYSYRTEVEPNIEALREFANNNKLNSDEDVIIIKHLVDNVIHYGYIPYSKLDETTEITTTFSRFSDLVSELFPVNVPPNVTE.

2 consecutive C4-type zinc fingers follow at residues 36–53 (CKDC…CYFC) and 63–84 (CNSC…TDGC).

As to quaternary structure, heterotetramer of two alpha and two beta subunits. The alpha subunit is believed to be responsible for DNA recognition, while the beta subunit is thought to mediate cleavage. Zn(2+) serves as cofactor.

It carries out the reaction Endonucleolytic cleavage of DNA to give specific double-stranded fragments with terminal 5'-phosphates.. In terms of biological role, a P subtype restriction enzyme that recognizes the double-stranded sequence 5'-CCN(7)GG-3' and cleaves after N-7. This is Type II restriction enzyme BslI subunit alpha from Bacillus sp. (strain NEB-606).